Consider the following 358-residue polypeptide: tRNA-specific 2-thiouridylase MnmA (358 aa).

ATP is bound by residues 6–13 (ALSGGVDS) and Met32. The active-site Nucleophile is Cys103. Cys103 and Cys201 are joined by a disulfide. An ATP-binding site is contributed by Gly127. Residues 151-153 (KDQ) form an interaction with tRNA region. Residue Cys201 is the Cysteine persulfide intermediate of the active site.

The protein belongs to the MnmA/TRMU family.

Its subcellular location is the cytoplasm. It carries out the reaction S-sulfanyl-L-cysteinyl-[protein] + uridine(34) in tRNA + AH2 + ATP = 2-thiouridine(34) in tRNA + L-cysteinyl-[protein] + A + AMP + diphosphate + H(+). Its function is as follows. Catalyzes the 2-thiolation of uridine at the wobble position (U34) of tRNA, leading to the formation of s(2)U34. The polypeptide is tRNA-specific 2-thiouridylase MnmA (Thermotoga sp. (strain RQ2)).